Reading from the N-terminus, the 153-residue chain is MKSWEIAVVLVAAVYLCSQVNFVAGLECYVCSNQTGNTEKCLNTIKTCEPFENVCGTEIRWGSQPYFSEGALKQYYVSKRCMTKEQCQSKRKRYMQLYCTHIWYEDWACNECCKGDRCNYFVISGAPSRQGYGVCLTLLTALLGLGSWLIPRS.

The first 25 residues, 1 to 25, serve as a signal peptide directing secretion; that stretch reads MKSWEIAVVLVAAVYLCSQVNFVAG. Over 26-130 the chain is Extracellular; that stretch reads LECYVCSNQT…FVISGAPSRQ (105 aa). Disulfide bonds link C28-C55, C31-C41, C48-C81, C87-C112, C99-C109, and C113-C118. N33 carries N-linked (GlcNAc...) asparagine glycosylation. The GPI-anchor amidated serine moiety is linked to residue S124. Positions 125 to 153 are cleaved as a propeptide — removed in mature form; the sequence is GAPSRQGYGVCLTLLTALLGLGSWLIPRS. The chain crosses the membrane as a helical span at residues 131–151; that stretch reads GYGVCLTLLTALLGLGSWLIP. At 152 to 153 the chain is on the cytoplasmic side; sequence RS.

The protein belongs to the snake toxin-like superfamily. Post-translationally, GPI-anchored. Expressed in all tissues that form septate junctions, including hindgut, trachea, epidermis and dorsal pouch. Expressed in subperineurial glial cells that form the hemolymph-brain barrier of the central nervous system.

The protein resides in the endosome membrane. It localises to the endoplasmic reticulum membrane. Its subcellular location is the cell membrane. It is found in the cell junction. The protein localises to the septate junction. In terms of biological role, required for septate junction assembly, possibly by organizing the preassembly and transport of septate junction proteins such as dlg1/disks large 1 and Nrx-IV/Neurexin-IV. Involved in paracellular barrier functions of trachea, hindgut and salivary gland mediated by epithelial cell septate junctions. Involved in paracellular barrier functions of the hemolymph-brain barrier (insect blood-brain barrier) mediated by glial cell septate junctions. Required for maintenance of septate junctions in imaginal disk epithelial cells. Involved in the epithelial cell wound-healing response. Directly or indirectly mediates cell-cell adhesion during septate junction formation. This chain is UPAR/Ly6 domain-containing protein cold, found in Drosophila melanogaster (Fruit fly).